The following is a 265-amino-acid chain: Neuronal membrane glycoprotein M6-b (265 aa).

Residues 31 to 51 traverse the membrane as a helical segment; the sequence is GGVPYASLVATILCFSGVALF. N-linked (GlcNAc...) asparagine glycosylation occurs at Asn73. 2 helical membrane-spanning segments follow: residues 90–110 and 136–156; these read VIYG…AEGF and FVFL…FSAV. N-linked (GlcNAc...) asparagine glycosylation is present at Asn177. The helical transmembrane segment at 224 to 244 threads the bilayer; it reads LFIVACAGAGATVIALLIYMM. Ser257 carries the post-translational modification Phosphoserine.

It belongs to the myelin proteolipid protein family. As to quaternary structure, interacts with SERT. As to expression, highly expressed in the ventral medullary surface, moderately in the cerebral cortex and cerebellum, poorly in lung and kidney, and not at all in heart, skeletal muscle, liver, stomach or stomach.

It localises to the membrane. The protein localises to the cell membrane. May be involved in neural development. Involved in regulation of osteoblast function and bone formation. Involved in matrix vesicle release by osteoblasts; this function seems to involve maintenance of the actin cytoskeleton. May be involved in cellular trafficking of SERT and thereby in regulation of serotonin uptake. In Rattus norvegicus (Rat), this protein is Neuronal membrane glycoprotein M6-b (Gpm6b).